We begin with the raw amino-acid sequence, 334 residues long: MTENSDKVPITMVGPEDVEFCSPPAYATVTVKPSGSPTRLLKVGAVVLISGAVLLLFGAIGAFYFWKGNDNHIYNVHYTMSINGRLQDASMEIDAANNLETFKMGSGAEEAIEVNDFQNGITGIRFAGGEKCYIKAQVKARIPEVSTGTKQSISELEGKIMPVKYEENSLIWVAVDQPVKDNSFLSSKILEFCGDLPIFWLKPMYPKEIPRERREVVRSSAPSTTRRPHSEPRGNAGPGRLSNRTRPSVQDDEEPFNPDNPYHQQEGESMTFDPRLDHEGICCIECRRSYTHCQKICEPLGGYYPWPYNYQGCRSACRVVMPCSWWVARILGMV.

A helical transmembrane segment spans residues 46 to 66; that stretch reads VVLISGAVLLLFGAIGAFYFW. The BRICHOS domain maps to 105–201; that stretch reads GSGAEEAIEV…FCGDLPIFWL (97 aa). A disulfide bond links Cys-132 and Cys-193. The propeptide occupies 211-214; that stretch reads RERR. The interval 212 to 268 is disordered; the sequence is ERREVVRSSAPSTTRRPHSEPRGNAGPGRLSNRTRPSVQDDEEPFNPDNPYHQQEGE. Asn-243 carries N-linked (GlcNAc...) asparagine glycosylation. 4 disulfides stabilise this stretch: Cys-282/Cys-286, Cys-283/Cys-323, Cys-293/Cys-317, and Cys-297/Cys-313.

Belongs to the chondromodulin-1 family. Post-translationally, after cleavage, the post-translationally modified ChM-I is secreted as a glycoprotein. Detected in cartilage, cardiac valves and valvular interstitial cells (at protein level). Expressed in eye.

Its subcellular location is the secreted. It localises to the extracellular space. The protein localises to the extracellular matrix. The protein resides in the endomembrane system. Functionally, bifunctional growth regulator that stimulates the growth of cultured chondrocytes in the presence of basic fibroblast growth factor (FGF) but inhibits the growth of cultured vascular endothelial cells. May contribute to the rapid growth of cartilage and vascular invasion prior to the replacement of cartilage by bone during endochondral bone development. Inhibits in vitro tube formation and mobilization of endothelial cells. Plays a role as antiangiogenic factor in cardiac valves to suppress neovascularization. The protein is Leukocyte cell-derived chemotaxin 1 of Rattus norvegicus (Rat).